The sequence spans 243 residues: Transmembrane protein 174 (243 aa).

2 helical membrane passes run 40 to 60 and 73 to 93; these read LLFS…MGWI and LLGP…VCKF. The disordered stretch occupies residues 205-229; sequence AGHDRPSSDADQLEGTQMGEEERVC.

Interacts with SLC34A1; regulates SLC34A1 internalization by PTH and FGF23.

The protein resides in the endoplasmic reticulum membrane. Its subcellular location is the apical cell membrane. Its function is as follows. Regulator of plasma phosphate homeostasis. Decreases serum inorganic phosphate (Pi) uptake by regulating the sodium-phosphate cotransporter SLC34A1 trafficking by PTH and FGF23 in the kidney. This chain is Transmembrane protein 174 (Tmem174), found in Rattus norvegicus (Rat).